We begin with the raw amino-acid sequence, 304 residues long: UDP-N-acetylenolpyruvoylglucosamine reductase (304 aa).

The 166-residue stretch at 28 to 193 (KTGGPADYLA…LTATFALTPG (166 aa)) folds into the FAD-binding PCMH-type domain. Arg-172 is a catalytic residue. Ser-222 functions as the Proton donor in the catalytic mechanism. Glu-292 is an active-site residue.

The protein belongs to the MurB family. It depends on FAD as a cofactor.

It is found in the cytoplasm. It catalyses the reaction UDP-N-acetyl-alpha-D-muramate + NADP(+) = UDP-N-acetyl-3-O-(1-carboxyvinyl)-alpha-D-glucosamine + NADPH + H(+). The protein operates within cell wall biogenesis; peptidoglycan biosynthesis. Cell wall formation. The polypeptide is UDP-N-acetylenolpyruvoylglucosamine reductase (Levilactobacillus brevis (strain ATCC 367 / BCRC 12310 / CIP 105137 / JCM 1170 / LMG 11437 / NCIMB 947 / NCTC 947) (Lactobacillus brevis)).